The following is a 720-amino-acid chain: Casein kinase II subunit alpha'-interacting protein (720 aa).

Over residues 227–249 (LSSPSFTNRLQRNSFPPTSSSLE) the composition is skewed to polar residues. Disordered regions lie at residues 227-250 (LSSP…SLEF), 264-303 (KPLK…SRRL), 333-366 (QNTA…SPKP), 602-640 (TQVQ…VDPT), and 678-698 (LRQS…KCLK). Low complexity predominate over residues 608-626 (SSSSSSSCSSVSSSSSASS). Positions 630 to 640 (PSPPTPWVDPT) are enriched in pro residues. The span at 687–698 (KPVRSHNSKCLK) shows a compositional bias: basic residues.

Interacts (via C-terminus) with CSNK2A2. Post-translationally, phosphorylated by CK2 (casein kinase II), specifically by complexes containing catalytic subunit CSNK2A2. Expressed exclusively in testis (at protein level). Within testis, expressed mainly in the intermediate compartment of the seminiferous tubules with weaker expression in the basal and adluminal compartments.

The protein resides in the nucleus. Its function is as follows. May play a role in chromatin regulation of male germ cells. The sequence is that of Casein kinase II subunit alpha'-interacting protein from Mus musculus (Mouse).